The primary structure comprises 828 residues: Protein TAPT1 homolog (828 aa).

3 stretches are compositionally biased toward low complexity: residues 67-83 (NNNN…GNHI), 212-233 (QQTQ…SQQP), and 302-321 (SNNN…NNNN). Disordered stretches follow at residues 67–92 (NNNN…NSSG), 212–236 (QQTQ…PFSY), and 297–346 (QTTP…TSSI). The next 5 membrane-spanning stretches (helical) occupy residues 428–448 (ISFG…FLPI), 472–492 (QIFD…LNFI), 562–582 (ILGP…HSLV), 722–742 (SSWG…SIVV), and 754–774 (IFGI…KIFI). Residues 797-822 (LSSSSSSSSSNSLNTTSTTSTSTSTT) show a composition bias toward low complexity. Residues 797 to 828 (LSSSSSSSSSNSLNTTSTTSTSTSTTNDKKNN) are disordered.

Belongs to the TAPT1 family.

The protein localises to the membrane. This Dictyostelium discoideum (Social amoeba) protein is Protein TAPT1 homolog.